The sequence spans 184 residues: ATP synthase subunit delta (184 aa).

The protein belongs to the ATPase delta chain family. F-type ATPases have 2 components, F(1) - the catalytic core - and F(0) - the membrane proton channel. F(1) has five subunits: alpha(3), beta(3), gamma(1), delta(1), epsilon(1). F(0) has three main subunits: a(1), b(2) and c(10-14). The alpha and beta chains form an alternating ring which encloses part of the gamma chain. F(1) is attached to F(0) by a central stalk formed by the gamma and epsilon chains, while a peripheral stalk is formed by the delta and b chains.

Its subcellular location is the cell inner membrane. F(1)F(0) ATP synthase produces ATP from ADP in the presence of a proton or sodium gradient. F-type ATPases consist of two structural domains, F(1) containing the extramembraneous catalytic core and F(0) containing the membrane proton channel, linked together by a central stalk and a peripheral stalk. During catalysis, ATP synthesis in the catalytic domain of F(1) is coupled via a rotary mechanism of the central stalk subunits to proton translocation. In terms of biological role, this protein is part of the stalk that links CF(0) to CF(1). It either transmits conformational changes from CF(0) to CF(1) or is implicated in proton conduction. The protein is ATP synthase subunit delta of Zymomonas mobilis subsp. mobilis (strain ATCC 31821 / ZM4 / CP4).